Here is a 152-residue protein sequence, read N- to C-terminus: Interleukin-1 family member 10 (152 aa).

The protein belongs to the IL-1 family. In terms of assembly, interacts with cargo receptor TMED10; the interaction mediates the translocation from the cytoplasm into the ERGIC (endoplasmic reticulum-Golgi intermediate compartment) and thereby secretion. As to expression, expressed in fetal skin, spleen and tonsil. Expressed mostly in the basal epithelia of skin and in proliferating B-cells of the tonsil.

Its subcellular location is the cytoplasm. The protein localises to the secreted. Functionally, cytokine with immunomodulatory activity. Alone, does not induce cytokine production, but reduces IL22 and IL17A production by T-cells in response to heat-killed Candida albicans. Reduces IL36G-induced production of IL8 by peripheral blood mononuclear cells. Increases IL6 production by dendritic cells stimulated by bacterial lipopolysaccharides (LPS). Ligand for IL-36R/IL1RL2. This Homo sapiens (Human) protein is Interleukin-1 family member 10.